A 418-amino-acid polypeptide reads, in one-letter code: CinA-like protein (418 aa).

Belongs to the CinA family.

The chain is CinA-like protein from Flavobacterium psychrophilum (strain ATCC 49511 / DSM 21280 / CIP 103535 / JIP02/86).